An 85-amino-acid chain; its full sequence is KAEREKERRMANNARERLRVRDINEAFKELGRMVQLHLKSDKPQTKLLILHQAVAVILSLEQQVRERNLNPKAACLKRREEEKVS.

Positions 7-60 constitute a bHLH domain; the sequence is ERRMANNARERLRVRDINEAFKELGRMVQLHLKSDKPQTKLLILHQAVAVILSL. The class A specific domain stretch occupies residues 62–85; sequence QQVRERNLNPKAACLKRREEEKVS.

In terms of assembly, efficient DNA binding requires dimerization with another bHLH protein. Forms homo- or heterooligomers with myogenin.

Its subcellular location is the nucleus. Its function is as follows. Transcription factor that binds to the immunoglobulin enhancer Mu-E5/KE5-motif. Involved in the initiation of neuronal differentiation. Binds to the E-box present in the somatostatin receptor 2 initiator element (SSTR2-INR) to activate transcription. This is Transcription factor 4 (TCF4) from Gallus gallus (Chicken).